Consider the following 1039-residue polypeptide: Alpha-mannosidase 2C1 (1039 aa).

Co(2+)-binding residues include His-259, Asp-261, Asp-371, and His-576. Catalysis depends on Asp-371, which acts as the Nucleophile.

The protein belongs to the glycosyl hydrolase 38 family. The cofactor is Co(2+). In terms of tissue distribution, expressed in kidney and liver (at protein level). Widely expressed, with highest levels in lung, ovary and testis. Also detected at lower levels in heart, brain, liver, spleen, kidney and thymus.

The protein localises to the cytoplasm. It catalyses the reaction Hydrolysis of terminal, non-reducing alpha-D-mannose residues in alpha-D-mannosides.. Inhibited by 1,4-dideoxy-1,4-imino-d-mannitol (DIM) and EDTA. In terms of biological role, cleaves alpha 1,2-, alpha 1,3-, and alpha 1,6-linked mannose residues from glycoproteins. Involved in the degradation of free oligosaccharides in the cytoplasm. The chain is Alpha-mannosidase 2C1 from Mus musculus (Mouse).